A 378-amino-acid chain; its full sequence is Succinate--CoA ligase [ADP-forming] subunit beta (378 aa).

The ATP-grasp domain occupies 9–237 (RDIVARYGIP…IAGEPESEIK (229 aa)). Residues K45, 52 to 54 (GRG), I94, and E99 contribute to the ATP site. Mg(2+) is bound by residues N192 and D206. Substrate contacts are provided by residues N257 and 314–316 (GIT).

The protein belongs to the succinate/malate CoA ligase beta subunit family. Heterotetramer of two alpha and two beta subunits. The cofactor is Mg(2+).

The catalysed reaction is succinate + ATP + CoA = succinyl-CoA + ADP + phosphate. It catalyses the reaction GTP + succinate + CoA = succinyl-CoA + GDP + phosphate. Its pathway is carbohydrate metabolism; tricarboxylic acid cycle; succinate from succinyl-CoA (ligase route): step 1/1. Functionally, succinyl-CoA synthetase functions in the citric acid cycle (TCA), coupling the hydrolysis of succinyl-CoA to the synthesis of either ATP or GTP and thus represents the only step of substrate-level phosphorylation in the TCA. The beta subunit provides nucleotide specificity of the enzyme and binds the substrate succinate, while the binding sites for coenzyme A and phosphate are found in the alpha subunit. This chain is Succinate--CoA ligase [ADP-forming] subunit beta, found in Herpetosiphon aurantiacus (strain ATCC 23779 / DSM 785 / 114-95).